We begin with the raw amino-acid sequence, 537 residues long: MYSNDDYAEGGYEEYGYEMAADDGYDRSFYPMHEDVKKFLVYFCSVIKGGVVYEIQNLYENTFPKLSEQHFEKKAWPSEDEVAHLVDNDNLFMILYKELYYRHLHARIQGGPSLEQRLNSFYNYCNFFNYILPSKEPVQLELPDIWLWELIDEFVYQFQNFAQYRARLTDKSDEEMDMLLNNNSKVWNILCILNVLHSLVSMSKIKDQLEAAAAGRDPEEVAGEFGRHSFYKMLGYFSLVGLLRVHSLLGDYHQAIKVLEPIELHKKSQYSHIPACQISTSYYVGFAYMMMRRYSDAIRTFSSILLYIQRTKQLYSARSYQNDQINKQTDQMYHLLAICLVLHPQCIDESIQQVLREKNYHDNMYKMQCGDLDTFRNFFVFACPKFVSPVPPPSDAPLDDYVKEALEHQTNVFMDEVRQQQELPTIRSYLKLYTTLPLLKLASFMDHIPQDEIGEQKIENLLTHLLCFKHKMKNIVWTKGASGLEGKFQSGSELDFYIDKDMIHIADTKVSHRYGDFFIRKILKFEDLNRRLHNLKG.

Positions 300-512 constitute a PCI domain; it reads TFSSILLYIQ…IHIADTKVSH (213 aa).

It belongs to the eIF-3 subunit L family. Component of the eukaryotic translation initiation factor 3 (eIF-3) complex.

It localises to the cytoplasm. In terms of biological role, component of the eukaryotic translation initiation factor 3 (eIF-3) complex, which is involved in protein synthesis of a specialized repertoire of mRNAs and, together with other initiation factors, stimulates binding of mRNA and methionyl-tRNAi to the 40S ribosome. The eIF-3 complex specifically targets and initiates translation of a subset of mRNAs involved in cell proliferation. This Culex quinquefasciatus (Southern house mosquito) protein is Eukaryotic translation initiation factor 3 subunit L.